Here is a 334-residue protein sequence, read N- to C-terminus: S-adenosylmethionine decarboxylase proenzyme (334 aa).

F7 contributes to the substrate binding site. Active-site residues include E8 and E11. E67 contacts substrate. The active-site Schiff-base intermediate with substrate; via pyruvic acid is the S68. S68 carries the post-translational modification Pyruvic acid (Ser); by autocatalysis. Residue C82 is the Proton donor; for catalytic activity of the active site. A substrate-binding site is contributed by F223. Active-site proton acceptor; for processing activity residues include S229 and H243. E247 serves as a coordination point for substrate. At S298 the chain carries Phosphoserine.

Belongs to the eukaryotic AdoMetDC family. As to quaternary structure, heterotetramer of two alpha and two beta chains. Pyruvate serves as cofactor. In terms of processing, is synthesized initially as an inactive proenzyme. Formation of the active enzyme involves a self-maturation process in which the active site pyruvoyl group is generated from an internal serine residue via an autocatalytic post-translational modification. Two non-identical subunits are generated from the proenzyme in this reaction, and the pyruvate is formed at the N-terminus of the alpha chain, which is derived from the carboxyl end of the proenzyme. The post-translation cleavage follows an unusual pathway, termed non-hydrolytic serinolysis, in which the side chain hydroxyl group of the serine supplies its oxygen atom to form the C-terminus of the beta chain, while the remainder of the serine residue undergoes an oxidative deamination to produce ammonia and the pyruvoyl group blocking the N-terminus of the alpha chain.

The enzyme catalyses S-adenosyl-L-methionine + H(+) = S-adenosyl 3-(methylsulfanyl)propylamine + CO2. It participates in amine and polyamine biosynthesis; S-adenosylmethioninamine biosynthesis; S-adenosylmethioninamine from S-adenosyl-L-methionine: step 1/1. Its function is as follows. Essential for biosynthesis of the polyamines spermidine and spermine. Promotes maintenance and self-renewal of embryonic stem cells, by maintaining spermine levels. This Bos taurus (Bovine) protein is S-adenosylmethionine decarboxylase proenzyme (AMD1).